The chain runs to 596 residues: RNA-binding protein involved in heterochromatin assembly dri1 (596 aa).

Serine 176 is modified (phosphoserine). The 79-residue stretch at 236-314 (KIVHVAGLTN…RMLEIIPSST (79 aa)) folds into the RRM domain. The segment at 335 to 364 (RPGDWNCPMCGFSNFQRRTSCFRCSFPGPT) adopts a RanBP2-type 1 zinc-finger fold. Serine 429 bears the Phosphoserine mark. 2 consecutive RanBP2-type zinc fingers follow at residues 437–468 (RAGD…SRAT) and 552–580 (DQGD…PHYS).

As to quaternary structure, interacts with dpb4. Interacts with chp1.

It is found in the chromosome. It localises to the nucleus. The protein localises to the cytoplasm. Its subcellular location is the cytoplasmic granule. Mediates heterochromatin assembly by promoting RNAi-mediated heterochromatin silencing and histone deacetylation. Binds pericetromeric transcripts and recruits the RNA-induced transcriptional silencing (RITS) complex to heterochromatin. Recruits sir2 to chromatin to promote deacetylation of 'Lys-9' of histone H3. Involved in bipolar spindle assembly during mitosis. Required for proper localization of kinesin-14/Klp2 on the spindle microtubules. This Schizosaccharomyces pombe (strain 972 / ATCC 24843) (Fission yeast) protein is RNA-binding protein involved in heterochromatin assembly dri1.